Here is a 122-residue protein sequence, read N- to C-terminus: Seminal vesicle secretory protein 5 (122 aa).

The N-terminal stretch at methionine 1–glycine 21 is a signal peptide. The disordered stretch occupies residues arginine 23–lysine 122. Residues serine 27–histidine 37 show a composition bias toward polar residues.

Belongs to the SVP2/SVP5/SVP6 family. In terms of tissue distribution, testis.

It localises to the secreted. Its subcellular location is the extracellular space. This chain is Seminal vesicle secretory protein 5 (Svs5), found in Mus musculus (Mouse).